The chain runs to 137 residues: MSVKIRLKRMGAKKRPFYRVVIADSRSPRDGRFIETVGTYNPIAQPAEIKLDEAKILTWLSNGAQPSDTARNLLSNAGILAKFAEVKAAKKSTAAKPAASATKPTEKNTVAEIKAYLDAQGTQYASSAKKADLLALV.

This sequence belongs to the bacterial ribosomal protein bS16 family.

This Leuconostoc citreum (strain KM20) protein is Small ribosomal subunit protein bS16.